Here is a 246-residue protein sequence, read N- to C-terminus: Protein crossbronx (246 aa).

In terms of domain architecture, UBC core spans 20–177 (QQEYKILAEY…VQESILESKA (158 aa)).

This sequence belongs to the ubiquitin-conjugating enzyme family. FTS subfamily.

The chain is Protein crossbronx (cbx) from Drosophila grimshawi (Hawaiian fruit fly).